Consider the following 447-residue polypeptide: Argininosuccinate synthase (447 aa).

Residues Ala-20–Ser-28 and Ala-46 each bind ATP. Residue Tyr-102 coordinates L-citrulline. 2 residues coordinate ATP: Gly-132 and Thr-134. 3 residues coordinate L-aspartate: Thr-134, Asn-138, and Asp-139. Asn-138 provides a ligand contact to L-citrulline. Asp-139 serves as a coordination point for ATP. Positions 142 and 195 each coordinate L-citrulline. Asp-197 contacts ATP. L-citrulline is bound by residues Thr-204, Glu-206, and Glu-283.

It belongs to the argininosuccinate synthase family. Type 2 subfamily. Homotetramer.

The protein resides in the cytoplasm. The catalysed reaction is L-citrulline + L-aspartate + ATP = 2-(N(omega)-L-arginino)succinate + AMP + diphosphate + H(+). The protein operates within amino-acid biosynthesis; L-arginine biosynthesis; L-arginine from L-ornithine and carbamoyl phosphate: step 2/3. The polypeptide is Argininosuccinate synthase (argG) (Neisseria meningitidis serogroup B (strain ATCC BAA-335 / MC58)).